The primary structure comprises 291 residues: Protease HtpX homolog (291 aa).

2 consecutive transmembrane segments (helical) span residues 4–24 (ILLF…VASL) and 39–59 (SALL…SLLI). A Zn(2+)-binding site is contributed by His144. The active site involves Glu145. His148 contacts Zn(2+). 2 helical membrane passes run 159–179 (LIQG…GYAV) and 199–219 (VSTI…VAWF). Residue Glu224 coordinates Zn(2+).

The protein belongs to the peptidase M48B family. Zn(2+) is required as a cofactor.

It localises to the cell inner membrane. This is Protease HtpX homolog from Polaromonas naphthalenivorans (strain CJ2).